We begin with the raw amino-acid sequence, 351 residues long: C(7)-cyclitol 7-kinase (351 aa).

Belongs to the ROK (NagC/XylR) family.

The catalysed reaction is valienone + ATP = valienone 7-phosphate + ADP + H(+). It catalyses the reaction validone + ATP = validone 7-phosphate + ADP + H(+). Functionally, involved in the biosynthesis of the antifungal agent validamycin A. Catalyzes the phosphorylation of valienone and validone to their 7-phosphate derivatives. The chain is C(7)-cyclitol 7-kinase from Streptomyces hygroscopicus subsp. jinggangensis (strain 5008).